The following is a 137-amino-acid chain: Putative pre-16S rRNA nuclease (137 aa).

This sequence belongs to the YqgF nuclease family.

It localises to the cytoplasm. Could be a nuclease involved in processing of the 5'-end of pre-16S rRNA. This Bacillus cereus (strain AH187) protein is Putative pre-16S rRNA nuclease.